Consider the following 298-residue polypeptide: Tyrosine recombinase XerC (298 aa).

The Core-binding (CB) domain maps to methionine 1–methionine 84. One can recognise a Tyr recombinase domain in the interval tyrosine 105–leucine 286. Active-site residues include arginine 145, lysine 169, histidine 238, arginine 241, and histidine 264. Residue tyrosine 273 is the O-(3'-phospho-DNA)-tyrosine intermediate of the active site.

It belongs to the 'phage' integrase family. XerC subfamily. In terms of assembly, forms a cyclic heterotetrameric complex composed of two molecules of XerC and two molecules of XerD.

It is found in the cytoplasm. Site-specific tyrosine recombinase, which acts by catalyzing the cutting and rejoining of the recombining DNA molecules. The XerC-XerD complex is essential to convert dimers of the bacterial chromosome into monomers to permit their segregation at cell division. It also contributes to the segregational stability of plasmids. This is Tyrosine recombinase XerC from Staphylococcus aureus.